The following is a 24-amino-acid chain: Xenoposin precursor fragment B2 (24 aa).

Expressed by the skin glands.

The protein localises to the secreted. In terms of biological role, has antimicrobial activity against Gram-negative bacterium E.coli ATCC 25922 (MIC=100 uM), Gram-positive bacterium S.auerus ATCC 25923 (MIC=25 uM). The protein is Xenoposin precursor fragment B2 of Xenopus borealis (Kenyan clawed frog).